The chain runs to 140 residues: uncharacterized protein (140 aa).

It is found in the mitochondrion. This is an uncharacterized protein from Homo sapiens (Human).